The following is a 2692-amino-acid chain: MALALWVFALLGSACLVSANIFEYQVDAQPLRPCELQRERAFLKRADYVPQCAEDGSFQTVQCKKDGGSCWCVDADGREVPGSRQPGRPVACLSFCQLQKQQILLSSYINSTATSYLPQCQDSGAYAPVQCDVRREQCWCVDAEGMEVYGTRRLGRPARCPGSCEIRNRRLLHGVGDKSPPQCSADGTFLPVQCKFVNTTDMMFFDLVHSYNRFPDAFVTFSSFRSRFPEVSGYCHCADSQGRELAGTGLELLLDEIYDTVFAGLDLASSFTETTLYRILQRRFLAVQLVTSGRFRCPTKCEVERFAATSFGHPYVPSCGRDGEYQAGQCQQEGLCWCVDAQGQEIPGTRRPSEPLSCAEGQSCPSERRRALSRLHLGPSGYSGQRGSFLAAERGPVSQTVPSFAASCPLPLKELFVESGILQPVVQGQKKEVTAATESLLKEGLRGIFPSRELARLALQFTANPKRLQQNLFGGRFLANVGQFNLSGALGTRGTFNFSHFFQQLGLPGFQKRQALADPAKSLSVGLDSNPATEAPEALKMGVAMNKTVVGSFGFEVNLQENRNALTFLSSLLELPEFLLFLQHAISVPEDIARDLGDVMEMALSSQGCEQTPGSLFVPSCTAEGSYEDVQCFAGECWCVDARGRELAGSRARGGRPRCPTACEKQRERMQSLLGRQPAGSSVFVPSCTREGHFLPVQCFSSDCYCVDADGQPIPGTRTAPGEPKQCPTPCQLQAEQAFLGTVRGLISNPSEPPVLSSIYIPQCSASGQWRRVQCDGPPEQAFEWYERWGAQSRSGQELTPAELLMKIMSYREAASGSFRLFIQNLYEAGQQGIFPGLARYSSLQDVPLAVLEGNLTQATGNILLEPYLFWQILNGQLPRYPGPYSDFSAPLAHLDLRSCWCVDEAGRKLEGTQTEPSKVPACPGSCEEVKLRVLQFIKEAEEIVMVSNSSQFPLGESFLAAKGIRLTDEELALPPLSPSRETFLEKFLSGSDYAIRLAAQSTFSFYQRRRVALSDAPRTSGPLQPYPYVPQCDALGSWEPVQCHAATGHCWCVDGEGAYLPASLAARSPQVLQCPTPCETSRVRGLLSAWKQAGSQVRPSPKDLFIPACTETGEFARLQASEASTWCVDPASGEAMPPGTNSSAPCPGLCEVLQRGVPSRRASPGTTPACRAEDGGFAPVQCDPAQGSCWCVLGSGEEVPGTRVAGSQPACERPQLWQTIQTRGQFQLQLPPGKVCSADYAGLLPTFQVVILDELTARGFCRIQVTTARTPVSIPVCDDSTVRVGCLSLDRLGVNVTWTLRLEDAPPASLPDLRDIEEALAGKDLVGRFADLIQSGTFQLHLDSRTFPADPSIHFLQGNSLGTSPRTRFGCVEGSRQVPATSNTSQDPLGCVRCPEGSYFQEEQCIPCPAGFYQEQTGSLACAPCPAGTTTTSVGAFSQTHCVTACQRDEAGLQCDQDGQYRASQRDRASGKAFCVDSEGRRLPWSETQAPLVDAQCLMMRKFEKLPESKVIFTADVAVLGSIVPDSESSLMQCLADCARDEACSFLTVSLEGSEGSCDFYAWTSDNIACTSSGQEEDALGTSKATSLGSLTCQVKVRPGDGVAPAVYLKKGQEFATIGQKRFEQTGFQNALSGLYSPVVFSASGASLTEAHLFCLLACDRDSCCDGFILTQVQGGPIICGLLSSPDVLLCHVRDWRDPSEAQADATCPGVTYDQDSRQGTLRLGGQEFKSLTPREGARDTFTSFQQVYLWKDSDMGSRSESMGCRRDMQPRPESPEETDLTAELFSPVDLNQVIVSENRSLPSQQHRLFKHLFSLQQAHLWCLSRCVQEPSFCQLAEITDSSPLYLTCTLYPEAQVCDDVMEASPRGCRRILPRRPNALFQRRVVLQDRVKNFYTRLPFQKLTGLSIRHKVPMADKAISSGFFECERLCDVDPCCTGFGFLNVSQLKGGEVTCLTLNSLGLQTCSEENGGSWRLLACGSPDTEVRTYPFGWYQKPAVQNDAPSFCPSAALPPVPEKVALDSWQPLPPSSVVVDPSIRNFDVAHISTAAVGDFSAARERCLLECSRHQACLVTTLQTRPGAVRCMFYADTQSCTHSLQAQNCQLLLREEATHIYRKPDIPLPGLGSSAPTVTIATHGQLLGTSQAIQLGASWKQVDQFLGVPYAAPPLAESRFRAPEPLNWTGTWDATKPRASCWQPGIRPATAPGVSEDCLYLSVFVPQSLTPNSSVLVFFHNGAEGPLAMAVDGSFLAAVGNLIVVTASYRTGVFGFLSSGSSEVSGNWGLLDQVAALTWVQTHIGVFGGDPRRVALAADRGGADVAGIHLLTSRATNSRLFRRAVLMGGSVLSPAAVIRPDRAQQQAAALAKEVGCPPRPSQKWYPASAGACQPPNDAQMQLLAVSGPFHYWGPVVDGQLLREAPARALQRPPRAKLDLLIGSSQDDGLIDRAKAVKRFEESQGRTSSKTAFYQALQNSLGGEAGDPGVQAAATWYYSLEHDTDDYASFSRALEAATRDYFIICPVIDMASHWARTARGNVFMYHAPESYSHGSLELLADVRYAFGLPFYPAYEGQFTQEEKSLSLKIMQYFSNFVRSGNPNYPHEFSRKAPEFAAPWPDFVPGDGAESYKELSVLLPNRQGLKKADCSFWSKYILSLKASADEAEDGPLAESEEEDRPGLTEDLLGLPELASKSYSK.

Residues 1–19 (MALALWVFALLGSACLVSA) form the signal peptide. Tyr-24 is modified (iodotyrosine; alternate). Tyr-24 is subject to Sulfotyrosine; alternate. Position 24 is a thyroxine; alternate (Tyr-24). At Tyr-24 the chain carries Triiodothyronine; alternate. 3 Thyroglobulin type-1 domains span residues 31–92 (LRPC…PVAC), 93–160 (LSFC…PARC), and 161–248 (PGSC…LAGT). 8 cysteine pairs are disulfide-bonded: Cys-34-Cys-52, Cys-63-Cys-70, Cys-72-Cys-92, Cys-96-Cys-120, Cys-131-Cys-138, Cys-140-Cys-160, Cys-164-Cys-183, and Cys-194-Cys-235. At Tyr-108 the chain carries Iodotyrosine. Asn-110 carries an N-linked (GlcNAc...) asparagine glycan. Tyr-149 bears the Iodotyrosine; alternate mark. Tyr-149 carries the diiodotyrosine; alternate modification. Residue Asn-198 is glycosylated (N-linked (GlcNAc...) asparagine). 2 positions are modified to iodotyrosine: Tyr-234 and Tyr-258. One can recognise a Thyroglobulin type-1 4 domain in the interval 298-358 (PTKCEVERFA…TRRPSEPLSC (61 aa)). Disulfide bonds link Cys-301-Cys-319, Cys-330-Cys-336, Cys-338-Cys-358, Cys-364-Cys-621, Cys-408-Cys-609, Cys-632-Cys-637, Cys-639-Cys-659, Cys-663-Cys-688, and Cys-699-Cys-704. N-linked (GlcNAc...) asparagine glycosylation is found at Asn-485, Asn-497, and Asn-546. Thyroglobulin type-1 domains lie at 606 to 659 (SQGC…RPRC), 660 to 727 (PTAC…PKQC), and 728 to 923 (PTPC…VPAC). Tyr-705 carries the iodotyrosine; alternate modification. Thyroxine; alternate is present on Tyr-705. Tyr-705 is modified (triiodothyronine; alternate). Diiodotyrosine; alternate is present on Tyr-705. Cystine bridges form between Cys-706/Cys-727, Cys-731/Cys-764, Cys-775/Cys-900, Cys-902/Cys-923, Cys-927/Cys-1033, Cys-1044/Cys-1051, Cys-1053/Cys-1079, Cys-1128/Cys-1147, Cys-1151/Cys-1171, Cys-1183/Cys-1190, Cys-1192/Cys-1212, Cys-1237/Cys-1287, and Cys-1262/Cys-1278. N-linked (GlcNAc...) asparagine glycosylation occurs at Asn-749. Iodotyrosine is present on Tyr-786. Residue Asn-855 is glycosylated (N-linked (GlcNAc...) asparagine). Tyr-868 is subject to Iodotyrosine; alternate. Tyr-868 carries the diiodotyrosine; alternate modification. Tyr-885 is modified (diiodotyrosine). N-linked (GlcNAc...) asparagine glycosylation occurs at Asn-949. The residue at position 994 (Tyr-994) is an Iodotyrosine; alternate. The residue at position 994 (Tyr-994) is a Diiodotyrosine; alternate. Thyroglobulin type-1 domains follow at residues 1021-1079 (SGPL…PTPC), 1088-1147 (LSAW…SAPC), and 1148-1212 (PGLC…QPAC). Residue Asn-1142 is glycosylated (N-linked (GlcNAc...) asparagine). The residue at position 1241 (Tyr-1241) is an Iodotyrosine. Tyr-1241 carries the thyroxine modification. Asn-1296 and Asn-1384 each carry an N-linked (GlcNAc...) asparagine glycan. 13 disulfides stabilise this stretch: Cys-1372-Cys-1392, Cys-1395-Cys-1406, Cys-1409-Cys-1423, Cys-1426-Cys-1443, Cys-1447-Cys-1456, Cys-1476-Cys-1498, Cys-1535-Cys-1559, Cys-1539-Cys-1545, Cys-1571-Cys-1594, Cys-1656-Cys-1681, Cys-1660-Cys-1666, Cys-1665-Cys-1766, and Cys-1692-Cys-1709. Type II repeat units follow at residues 1389-1402 (PLGC…SYFQ), 1403-1419 (EEQC…EQTG), and 1420-1436 (SLAC…TSVG). At Tyr-1400 the chain carries Iodotyrosine; alternate. Tyr-1400 is subject to Diiodotyrosine; alternate. In terms of domain architecture, Thyroglobulin type-1 11 spans 1444–1498 (VTACQRDEAGLQCDQDGQYRASQRDRASGKAFCVDSEGRRLPWSETQAPLVDAQC). Residues 1535–1655 (CLADCARDEA…GASLTEAHLF (121 aa)) form a Type IIIA repeat. The stretch at 1656-1823 (CLLACDRDSC…LFSLQQAHLW (168 aa)) is one Type IIIB repeat. The N-linked (GlcNAc...) asparagine glycan is linked to Asn-1800. 10 cysteine pairs are disulfide-bonded: Cys-1824–Cys-1850, Cys-1828–Cys-1835, Cys-1859–Cys-1870, Cys-1927–Cys-1955, Cys-1931–Cys-1937, Cys-1936–Cys-2007, Cys-1966–Cys-1979, Cys-2061–Cys-2085, Cys-2065–Cys-2071, and Cys-2094–Cys-2103. A Type IIIA repeat occupies 1824 to 1926 (CLSRCVQEPS…DKAISSGFFE (103 aa)). The stretch at 1927 to 2060 (CERLCDVDPC…VGDFSAARER (134 aa)) is one Type IIIB repeat. The N-linked (GlcNAc...) asparagine glycan is linked to Asn-1944. A Type IIIA repeat occupies 2061-2118 (CLLECSRHQACLVTTLQTRPGAVRCMFYADTQSCTHSLQAQNCQLLLREEATHIYRKP). The residue at position 2115 (Tyr-2115) is an Iodotyrosine. Positions 2119 to 2692 (DIPLPGLGSS…PELASKSYSK (574 aa)) are cholinesterase-like (ChEL). N-linked (GlcNAc...) asparagine glycans are attached at residues Asn-2181 and Asn-2226. The residue at position 2467 (Tyr-2467) is a Thyroxine. Tyr-2500 carries the iodotyrosine; alternate modification. Thyroxine; alternate is present on Tyr-2500. Tyr-2500 is subject to Triiodothyronine; alternate. Tyr-2500 bears the Diiodotyrosine; alternate mark. Iodotyrosine occurs at positions 2514 and 2544. Cys-2518 and Cys-2642 form a disulfide bridge. Tyr-2624 is modified (diiodotyrosine). The span at 2658-2671 (EAEDGPLAESEEED) shows a compositional bias: acidic residues. The interval 2658 to 2692 (EAEDGPLAESEEEDRPGLTEDLLGLPELASKSYSK) is disordered. Tyr-2690 carries the post-translational modification Iodotyrosine; alternate. Tyr-2690 carries the thyroxine; alternate modification. Tyr-2690 is subject to Triiodothyronine; alternate. The residue at position 2690 (Tyr-2690) is a Diiodotyrosine; alternate.

The protein belongs to the type-B carboxylesterase/lipase family. Monomer. Homodimer (via ChEL region); occurs in the endoplasmic reticulum and is required for export to the Golgi apparatus. Homooligomer; disulfide-linked; stored in this form in the thyroid follicle lumen. Iodinated on tyrosine residues by TPO. There are 4 pairs of iodinated tyrosines used for coupling: acceptor Tyr-24 is coupled to donor Tyr-149 or Tyr-234, acceptor Tyr-2500 is coupled to donor Tyr-2467, acceptor Tyr-2690 in monomer 1 is coupled to donor Tyr-2690 in monomer 2 and acceptor Tyr-1241 in monomer 1 is coupled to donor Tyr-108 in monomer 2. Post-translationally, sulfated tyrosines are desulfated during iodination. In terms of processing, undergoes sequential proteolysis by cathepsins to release thyroxine (T4) and triiodothyronine (T3) hormones. In the thyroid follicle lumen, cross-linked TG (storage form) is solubilized by limited proteolysis mediated by cathepsins CTSB and/or CTSL. Partially cleaved TG is further processed by CTSK/cathepsin K and/or CTSL resulting in the release of T4. Following endocytosis, further processing occurs leading to the release of T3 and more T4 hormones. Expressed in thyroid epithelial cells.

Its subcellular location is the secreted. Functionally, acts as a substrate for the production of iodinated thyroid hormones thyroxine (T4) and triiodothyronine (T3). The synthesis of T3 and T4 involves iodination of selected tyrosine residues of TG/thyroglobulin followed by their oxidative coupling. Following TG re-internalization and lysosomal-mediated proteolysis, T3 and T4 are released from the polypeptide backbone leading to their secretion into the bloodstream. One dimer produces 7 thyroid hormone molecules. The polypeptide is Thyroglobulin (Sus scrofa (Pig)).